The following is a 94-amino-acid chain: uncharacterized protein (94 aa).

This is an uncharacterized protein from Saccharolobus islandicus (Sulfolobus islandicus).